A 1218-amino-acid polypeptide reads, in one-letter code: Coatomer subunit alpha-2 (1218 aa).

8 WD repeats span residues 7 to 48 (TKSN…DRFD), 49 to 88 (EHEGPVRGVHFHNSQPLFVSGGDDYKIKVWNYKTHRCLFT), 91 to 132 (GHLD…SVLT), 133 to 172 (GHNHYVMCASFHPKEDLVVSASLDQTVRVWDIGALKKKSA), 202 to 241 (GHDRGVNWASFHPTLPLIVSGADDRQVKLWRMNETKAWEV), 246 to 285 (GHMNNVSSVMFHAKQDIIVSNSEDKSIRVWDATKRTGIQT), 288 to 326 (REHDRFWILAVHPEINLLAAGHDNGMIVFKLERERPAFA), and 363 to 404 (SLNQ…VGRS). Residues 826-849 (NRGAVDEEEEDVEGDWGEGLDKFD) form a disordered region. Acidic residues predominate over residues 831–843 (DEEEEDVEGDWGE).

In terms of assembly, oligomeric complex that consists of at least the alpha, beta, beta', gamma, delta, epsilon and zeta subunits.

It is found in the cytoplasm. The protein resides in the golgi apparatus membrane. Its subcellular location is the cytoplasmic vesicle. It localises to the COPI-coated vesicle membrane. The coatomer is a cytosolic protein complex that binds to dilysine motifs and reversibly associates with Golgi non-clathrin-coated vesicles, which further mediate biosynthetic protein transport from the ER, via the Golgi up to the trans Golgi network. Coatomer complex is required for budding from Golgi membranes, and is essential for the retrograde Golgi-to-ER transport of dilysine-tagged proteins. This chain is Coatomer subunit alpha-2, found in Arabidopsis thaliana (Mouse-ear cress).